A 603-amino-acid polypeptide reads, in one-letter code: Chaperone protein DnaK (603 aa).

At threonine 175 the chain carries Phosphothreonine; by autocatalysis. A compositionally biased stretch (low complexity) spans 573-586 (AQQAQQQNPDNQNN). The segment at 573–603 (AQQAQQQNPDNQNNNKDDVTEATVTDDSTKK) is disordered. Residues 594 to 603 (ATVTDDSTKK) show a composition bias toward polar residues.

The protein belongs to the heat shock protein 70 family.

Functionally, acts as a chaperone. The polypeptide is Chaperone protein DnaK (Ureaplasma parvum serovar 3 (strain ATCC 27815 / 27 / NCTC 11736)).